Consider the following 573-residue polypeptide: 2-succinyl-5-enolpyruvyl-6-hydroxy-3-cyclohexene-1-carboxylate synthase (573 aa).

This sequence belongs to the TPP enzyme family. MenD subfamily. In terms of assembly, homodimer. Mg(2+) is required as a cofactor. It depends on Mn(2+) as a cofactor. Requires thiamine diphosphate as cofactor.

The catalysed reaction is isochorismate + 2-oxoglutarate + H(+) = 5-enolpyruvoyl-6-hydroxy-2-succinyl-cyclohex-3-ene-1-carboxylate + CO2. It participates in quinol/quinone metabolism; 1,4-dihydroxy-2-naphthoate biosynthesis; 1,4-dihydroxy-2-naphthoate from chorismate: step 2/7. Its pathway is quinol/quinone metabolism; menaquinone biosynthesis. Its function is as follows. Catalyzes the thiamine diphosphate-dependent decarboxylation of 2-oxoglutarate and the subsequent addition of the resulting succinic semialdehyde-thiamine pyrophosphate anion to isochorismate to yield 2-succinyl-5-enolpyruvyl-6-hydroxy-3-cyclohexene-1-carboxylate (SEPHCHC). The chain is 2-succinyl-5-enolpyruvyl-6-hydroxy-3-cyclohexene-1-carboxylate synthase from Shewanella sp. (strain ANA-3).